Here is a 218-residue protein sequence, read N- to C-terminus: Radial spoke head 1 homolog (218 aa).

The span at 1–13 shows a compositional bias: acidic residues; that stretch reads MSDAGTEEFDEEQ. The segment at 1 to 48 is disordered; it reads MSDAGTEEFDEEQGSLGEYEGDRNEAGERHGQGKAVLPRGDTYQGAYE. MORN repeat units follow at residues 19–42, 43–65, 66–88, 89–111, 112–134, and 158–180; these read YEGD…RGDT, YQGA…NGAR, YTGE…DGSK, YEGS…NGDT, YDGE…ETGS, and YHGN…IGCE. Residues 20–31 are compositionally biased toward basic and acidic residues; it reads EGDRNEAGERHG.

As to quaternary structure, component of the axonemal radial spoke complexes. Interacts with septin SEPT7. In terms of tissue distribution, testis-specific.

Its subcellular location is the cytoplasm. The protein resides in the cytoskeleton. It is found in the cilium axoneme. The protein localises to the flagellum basal body. It localises to the flagellum axoneme. Functionally, functions as part of axonemal radial spoke complexes that play an important part in the motility of sperm and cilia. This chain is Radial spoke head 1 homolog (rsph1), found in Cyprinus carpio (Common carp).